Here is a 215-residue protein sequence, read N- to C-terminus: Glycerol-3-phosphate acyltransferase (215 aa).

6 helical membrane passes run 3 to 23 (LILL…LWIG), 42 to 61 (TNTF…LIDI), 68 to 90 (TLLP…FAVL), 110 to 130 (AGVL…VFVL), 134 to 154 (LFSM…ISVL), and 162 to 182 (LLPG…AIII).

It belongs to the PlsY family. As to quaternary structure, probably interacts with PlsX.

The protein resides in the cell membrane. It catalyses the reaction an acyl phosphate + sn-glycerol 3-phosphate = a 1-acyl-sn-glycero-3-phosphate + phosphate. The protein operates within lipid metabolism; phospholipid metabolism. Its function is as follows. Catalyzes the transfer of an acyl group from acyl-phosphate (acyl-PO(4)) to glycerol-3-phosphate (G3P) to form lysophosphatidic acid (LPA). This enzyme utilizes acyl-phosphate as fatty acyl donor, but not acyl-CoA or acyl-ACP. The chain is Glycerol-3-phosphate acyltransferase from Streptococcus equi subsp. zooepidemicus (strain H70).